Here is a 476-residue protein sequence, read N- to C-terminus: Glycogen synthase (476 aa).

K15 is a binding site for ADP-alpha-D-glucose.

It belongs to the glycosyltransferase 1 family. Bacterial/plant glycogen synthase subfamily.

It carries out the reaction [(1-&gt;4)-alpha-D-glucosyl](n) + ADP-alpha-D-glucose = [(1-&gt;4)-alpha-D-glucosyl](n+1) + ADP + H(+). It participates in glycan biosynthesis; glycogen biosynthesis. Its function is as follows. Synthesizes alpha-1,4-glucan chains using ADP-glucose. In Marinomonas sp. (strain MWYL1), this protein is Glycogen synthase.